A 313-amino-acid polypeptide reads, in one-letter code: Ribosomal RNA small subunit methyltransferase H (313 aa).

Residues 35-37 (GGH), Asp55, Phe80, Asp102, and Gln109 each bind S-adenosyl-L-methionine.

The protein belongs to the methyltransferase superfamily. RsmH family.

Its subcellular location is the cytoplasm. The catalysed reaction is cytidine(1402) in 16S rRNA + S-adenosyl-L-methionine = N(4)-methylcytidine(1402) in 16S rRNA + S-adenosyl-L-homocysteine + H(+). Specifically methylates the N4 position of cytidine in position 1402 (C1402) of 16S rRNA. The protein is Ribosomal RNA small subunit methyltransferase H of Shewanella violacea (strain JCM 10179 / CIP 106290 / LMG 19151 / DSS12).